The following is a 260-amino-acid chain: MTILAEIVKYKQSLLQNGYYQDKLNTLKSVKIQNKKSFINAIEKERKLAIIAEIKSKSPTVNDLPERDLSQQISDYEKYGANAVSILTDEKYFGGSFERLQALTTKTTLPVLCKDFIIDPLQIDVAKQAGASMILLIVNILSDKQLKDLYNYAISQNLEVLVEVHDRHELERVYKVNAKLIGVNNRDLKRFVTNVEHTNTILENKKPNHYYISESGIHDASDVRKILHSGIDGLLIGEALMRCDNLSEFLPQLKMQKVKS.

The protein belongs to the TrpC family.

It catalyses the reaction 1-(2-carboxyphenylamino)-1-deoxy-D-ribulose 5-phosphate + H(+) = (1S,2R)-1-C-(indol-3-yl)glycerol 3-phosphate + CO2 + H2O. Its pathway is amino-acid biosynthesis; L-tryptophan biosynthesis; L-tryptophan from chorismate: step 4/5. This chain is Indole-3-glycerol phosphate synthase, found in Staphylococcus aureus (strain bovine RF122 / ET3-1).